The sequence spans 561 residues: Arginine--tRNA ligase (561 aa).

A 'HIGH' region motif is present at residues 129–139 (ANPTGPLHVGH).

This sequence belongs to the class-I aminoacyl-tRNA synthetase family. In terms of assembly, monomer.

The protein localises to the cytoplasm. The enzyme catalyses tRNA(Arg) + L-arginine + ATP = L-arginyl-tRNA(Arg) + AMP + diphosphate. The polypeptide is Arginine--tRNA ligase (Bordetella avium (strain 197N)).